The following is a 745-amino-acid chain: Protein PHOX1 (745 aa).

The segment covering 1–10 has biased composition (basic residues); the sequence is MGKPTGKKKN. The tract at residues 1–37 is disordered; it reads MGKPTGKKKNNNYTEMPPTESSTTGGGKTGKSFDRSA. TPR repeat units follow at residues 52-85, 90-125, and 126-159; these read ALEL…LPRD, AYLR…SPRF, and SKAL…EPEN. The 80-residue stretch at 280–359 folds into the PB1 domain; the sequence is TRTVKLVHGD…GSFRLYIAEV (80 aa). TPR repeat units follow at residues 406 to 441, 443 to 472, 494 to 528, and 553 to 586; these read EHWI…YTEA, EDIV…AMFN, ETIL…KSDF, and GEVD…WEEM.

Interacts with myosin XI-1 and XI-K.

The protein resides in the cytoplasmic vesicle membrane. Carboxylate clamp type tetratricopeptide repeat protein that may act as a potential Hsp90/Hsp70 co-chaperone. Contributes to polar growth of root hairs. The protein is Protein PHOX1 of Arabidopsis thaliana (Mouse-ear cress).